The sequence spans 350 residues: MNQLFLHCRPGFEKECAAEITELAAAQGIYGYSKTKDNAAFVVFITQDERGAETLIRQLPFQSLIFVRQWFAGFGNLSDLPVTDRVSPLLEAARALPKTSDLTGETVDTNEGKALSALVKKFLLPFGKALDAHKCLDRKSPWRLHLVFLSGTEAYLGVAPVNNSSAWPMGIPRLRLPKSAPSRATLKLEEAWHHFIPAADWDRRLAPGMRAVDLGAAPGGWTWQLVQRSIYVEAIDNGPMDKDLLDSGLVTHVLADGFLFEPKKPVDWLVCDIVDKPARVSSMVIKWFSKGHCRQAIFNLKLPMKQRYMEVQKCRTRILGELGSLGMRAELDFKQLYHDREEVTGYLRVF.

S-adenosyl-L-methionine contacts are provided by residues 217–220 (APGG), aspartate 236, aspartate 256, and aspartate 272. The active-site Proton acceptor is the lysine 301.

This sequence belongs to the class I-like SAM-binding methyltransferase superfamily. RNA methyltransferase RlmE family. RlmM subfamily. As to quaternary structure, monomer.

The protein resides in the cytoplasm. It catalyses the reaction cytidine(2498) in 23S rRNA + S-adenosyl-L-methionine = 2'-O-methylcytidine(2498) in 23S rRNA + S-adenosyl-L-homocysteine + H(+). Its function is as follows. Catalyzes the 2'-O-methylation at nucleotide C2498 in 23S rRNA. This chain is Ribosomal RNA large subunit methyltransferase M, found in Cellvibrio japonicus (strain Ueda107) (Pseudomonas fluorescens subsp. cellulosa).